The chain runs to 435 residues: AP-2 complex subunit mu (435 aa).

The residue at position 45 (serine 45) is a Phosphoserine. At threonine 156 the chain carries Phosphothreonine. Residues 170 to 434 (RNELFLDVLE…IGRSGIYETR (265 aa)) enclose the MHD domain. Residues lysine 341, lysine 345, and lysine 354 each coordinate a 1,2-diacyl-sn-glycero-3-phospho-(1D-myo-inositol-3,4,5-trisphosphate).

Belongs to the adaptor complexes medium subunit family. As to quaternary structure, adaptor protein complex 2 (AP-2) is a heterotetramer composed of two large adaptins (alpha-type subunit AP2A1 or AP2A2 and beta-type subunit AP2B1), a medium adaptin (mu-type subunit AP2M1) and a small adaptin (sigma-type subunit AP2S1). Interacts with ATP6V1H and MEGF10. Interacts with EGFR. Interacts with PIP5K1C; tyrosine phosphorylation of PIP5K1C weakens the interaction. Interacts with KIAA0319; required for clathrin-mediated endocytosis of KIAA0319. Interacts with DVL2 (via DEP domain). Interacts with KCNQ1; mediates estrogen-induced internalization via clathrin-coated vesicles. Together with AP2A1 or AP2A2 and AP2B1, it interacts with ADAM10; this interaction facilitates ADAM10 endocytosis from the plasma membrane during long-term potentiation in hippocampal neurons. Probably interacts with ACE2 (via endocytic sorting signal motif); the interaction is inhibited by ACE2 phosphorylation. Interacts with RALBP1; the interaction is direct. Interacts with TMEM106B (via N-terminus). In terms of processing, phosphorylation at Thr-156 increases the affinity of the AP-2 complex for cargo membrane proteins during the initial stages of endocytosis.

It is found in the cell membrane. It localises to the membrane. The protein localises to the coated pit. Component of the adaptor protein complex 2 (AP-2). Adaptor protein complexes function in protein transport via transport vesicles in different membrane traffic pathways. Adaptor protein complexes are vesicle coat components and appear to be involved in cargo selection and vesicle formation. AP-2 is involved in clathrin-dependent endocytosis in which cargo proteins are incorporated into vesicles surrounded by clathrin (clathrin-coated vesicles, CCVs) which are destined for fusion with the early endosome. The clathrin lattice serves as a mechanical scaffold but is itself unable to bind directly to membrane components. Clathrin-associated adaptor protein (AP) complexes which can bind directly to both the clathrin lattice and to the lipid and protein components of membranes are considered to be the major clathrin adaptors contributing the CCV formation. AP-2 also serves as a cargo receptor to selectively sort the membrane proteins involved in receptor-mediated endocytosis. AP-2 seems to play a role in the recycling of synaptic vesicle membranes from the presynaptic surface. AP-2 recognizes Y-X-X-[FILMV] (Y-X-X-Phi) and [ED]-X-X-X-L-[LI] endocytosis signal motifs within the cytosolic tails of transmembrane cargo molecules. AP-2 may also play a role in maintaining normal post-endocytic trafficking through the ARF6-regulated, non-clathrin pathway. During long-term potentiation in hippocampal neurons, AP-2 is responsible for the endocytosis of ADAM10. The AP-2 mu subunit binds to transmembrane cargo proteins; it recognizes the Y-X-X-Phi motifs. The surface region interacting with to the Y-X-X-Phi motif is inaccessible in cytosolic AP-2, but becomes accessible through a conformational change following phosphorylation of AP-2 mu subunit at Thr-156 in membrane-associated AP-2. The membrane-specific phosphorylation event appears to involve assembled clathrin which activates the AP-2 mu kinase AAK1. Plays a role in endocytosis of frizzled family members upon Wnt signaling. The chain is AP-2 complex subunit mu (AP2M1) from Pongo abelii (Sumatran orangutan).